The primary structure comprises 165 residues: MLPVITRFARPALMAIRPVNAMGVLRASSITKRLYHPKVIEHYTHPRNVGSLDKKLPNVGTGLVGAPACGDVMRLQIKVNDSTGVIEDVKFKTFGCGSAIASSSYMTELVQGMTLDDAAKIKNTEIAKELSLPPVKLHCSMLAEDAIKAAIKDYKSKRNTPTMLS.

The N-terminal 27 residues, 1 to 27, are a transit peptide targeting the mitochondrion; that stretch reads MLPVITRFARPALMAIRPVNAMGVLRA. The SSQ1 binding region stretch occupies residues 132 to 136; the sequence is LPPVK.

It belongs to the NifU family. As to quaternary structure, homodimer, but can exist as monomers or trimers. Oligomerization may be regulated by Zn(2+) availability. Component of the core Fe-S cluster (ISC) assembly machinery. Interacts with YFH1/frataxin with a 1 to 1 stoichiometry; the interaction is direct. Interacts with the mitochondrial co-chaperones JAC1 and SSQ1. Interacts with NFS1. Interacts with YAH1/ferredoxin; interacts with the reduced form. [2Fe-2S] cluster serves as cofactor. The cofactor is Zn(2+).

Its subcellular location is the mitochondrion matrix. It participates in cofactor biosynthesis; iron-sulfur cluster biosynthesis. Scaffold protein for the de novo synthesis of iron-sulfur (Fe-S) clusters within mitochondria, which is required for maturation of both mitochondrial and cytoplasmic [2Fe-2S] and [4Fe-4S] proteins. First, a [2Fe-2S] cluster is transiently assembled on the scaffold proteins ISU1 and ISU2. In a second step, the cluster is released from ISU1/ISU2, transferred to glutaredoxin GRX5, followed by the formation of mitochondrial [2Fe-2S] proteins, the synthesis of [4Fe-4S] clusters and their target-specific insertion into the recipient apoproteins. Cluster assembly on ISU1/ISU2 depends on the function of the cysteine desulfurase complex NFS1-ISD11, which serves as the sulfur donor for cluster synthesis, the iron-binding protein frataxin (YFH1) as the putative iron donor, and the electron transfer chain comprised of ferredoxin reductase ARH1 and ferredoxin YAH1, which receive their electrons from NADH. Fe-S cluster release from ISU1/ISU2 is achieved by interaction with the Hsp70 chaperone SSQ1, assisted by the DnaJ-like co-chaperone JAC1 and the nucleotide exchange factor MGE1. ISU1 is the major isoform in yeast, while ISU2 is not detectable in cells grown to stationary phase. Also involved in production of a sulfur precursor required for thiolation of cytoplasmic tRNAs. This Saccharomyces cerevisiae (strain ATCC 204508 / S288c) (Baker's yeast) protein is Iron sulfur cluster assembly protein 1, mitochondrial.